The sequence spans 75 residues: Phytosulfokines 3 (75 aa).

The signal sequence occupies residues 1 to 22 (MSPKVIAICLVALLLPISISHG). Residues 23–66 (GRIGPIEPSKASSKVVERGNYDGRVEGCEEDDCLVERLLVAHLD) constitute a propeptide that is removed on maturation. A sulfotyrosine mark is found at Tyr67 and Tyr69. Residues 72–75 (GKHN) constitute a propeptide that is removed on maturation.

The protein belongs to the phytosulfokine family. In terms of processing, sulfation is important for activity and for the binding to a putative membrane receptor. PSK-alpha is produced by endopeptidase digestion. PSK-beta is produced from PSK-alpha by exopeptidase digestion.

It localises to the secreted. Functionally, promotes plant cell differentiation, organogenesis and somatic embryogenesis as well as cell proliferation. In Oryza sativa subsp. japonica (Rice), this protein is Phytosulfokines 3 (PSK3).